The following is a 575-amino-acid chain: Alpha-humulene synthase (575 aa).

4 residues coordinate Mg(2+): Asp-325, Asp-329, Asp-469, and Glu-477. Positions 325 to 329 match the DDXXD motif motif; that stretch reads DDLYD.

This sequence belongs to the terpene synthase family. Tpsa subfamily. Mg(2+) is required as a cofactor. The cofactor is Mn(2+).

It catalyses the reaction (2E,6E)-farnesyl diphosphate = alpha-humulene + diphosphate. It participates in sesquiterpene biosynthesis. Its pathway is terpene metabolism; oleoresin biosynthesis. Terpene synthase (TPS) involved in the biosynthesis of sesquiterpene natural products included in conifer oleoresin secretions and volatile emissions; these compounds contribute to biotic and abiotic stress defense against herbivores and pathogens. Catalyzes the conversion of (2E,6E)-farnesyl diphosphate (FPP) to (1E,4E,8E)-alpha-humulene. This chain is Alpha-humulene synthase, found in Picea glauca (White spruce).